The primary structure comprises 494 residues: MAATAECDVVMAATEPELLEDEDAKREAESFKEQGNAYYAKKDYNEAYNYYTKAIDMCPNNASYYGNRAATLMMLGRFREALGDAQQSVRLDDSFVRGHLREGKCHLSLGNAMAACRSFQRALELDHKNAQAQQEFKNANAVMEYEKIAEVDFEKRDFRKVVFCMDRALEFAPACHRFKILKAECLAMLGRYPEAQFVASDILRMDSTNADALYVRGLCLYYEDCIEKAVQFFVQALRMAPDHEKACVACRNAKALKAKKEDGNKAFKEGNYKLAYELYTEALGIDPNNIKTNAKLYCNRGTVNSKLRQLEDAIEDCTNAVKLDDTYIKAYLRRAQCYMDTEQFEEAVRDYEKVYQTEKTKEHKQLLKNAQLELKKSKRKDYYKILGVDKNASEDEIKKAYRKRALMHHPDRHSGASAEVQKEEEKKFKEVGEAFTILSDPKKKTRYDSGQDLDEEGMNMGDFDANNIFKAFFGGPGGFSFEASGPGNFYFQFG.

The residue at position 2 (alanine 2) is an N-acetylalanine. TPR repeat units follow at residues 28–61, 62–95, 96–129, 142–175, 210–243, 256–289, 294–327, and 328–361; these read AESFKEQGNAYYAKKDYNEAYNYYTKAIDMCPNN, ASYYGNRAATLMMLGRFREALGDAQQSVRLDDSF, VRGHLREGKCHLSLGNAMAACRSFQRALELDHKN, VMEYEKIAEVDFEKRDFRKVVFCMDRALEFAPAC, ADALYVRGLCLYYEDCIEKAVQFFVQALRMAPDH, LKAKKEDGNKAFKEGNYKLAYELYTEALGIDPNN, AKLYCNRGTVNSKLRQLEDAIEDCTNAVKLDDTY, and IKAYLRRAQCYMDTEQFEEAVRDYEKVYQTEKTK. Residues 381-451 form the J domain; the sequence is DYYKILGVDK…KKKTRYDSGQ (71 aa). At serine 393 the chain carries Phosphoserine.

As to quaternary structure, associates with complexes containing chaperones HSP70 and HSP90. Interacts with the GAP domain of NF1. Interacts with HSP90AA1. Interacts with HSPA1A/B; the interaction is enhanced by ATP. Interacts with HSP90AB1. Interacts with PGR. Interacts with RAD9A; the interaction is interrupted by UV and heat shock treatments. Interacts with HUS1 and RAD1. Interacts with NR1I3; this complex may also include HSP90 Interacts with HSPA8. Widely expressed with high levels in liver, skeletal muscle, kidney and testis.

It is found in the cytoplasm. The protein resides in the nucleus. The protein localises to the cytoskeleton. In terms of biological role, acts as a co-chaperone regulating the molecular chaperones HSP70 and HSP90 in folding of steroid receptors, such as the glucocorticoid receptor and the progesterone receptor. Proposed to act as a recycling chaperone by facilitating the return of chaperone substrates to early stages of chaperoning if further folding is required. In vitro, induces ATP-independent dissociation of HSP90 but not of HSP70 from the chaperone-substrate complexes. Recruits NR1I3 to the cytoplasm. This chain is DnaJ homolog subfamily C member 7 (Dnajc7), found in Mus musculus (Mouse).